The following is a 180-amino-acid chain: Anaerobic nitrite reductase GLB0 (180 aa).

Positions 23 to 172 (TYSKENEQLV…LAEQVKAEMH (150 aa)) constitute a Globin domain. The short motif at 56–60 (EIAPG) is the Homodimerization element. Heme b-binding residues include Ser-66, Lys-80, His-84, Lys-114, Thr-118, and His-119. A Homodimerization motif is present at residues 126 to 138 (DDQFEIVKEAILY).

This sequence belongs to the plant globin family. In terms of assembly, homodimer. Heme b serves as cofactor.

The protein localises to the cytoplasm. It is found in the nucleus. The catalysed reaction is Fe(III)-heme b-[protein] + nitric oxide + H2O = Fe(II)-heme b-[protein] + nitrite + 2 H(+). Functionally, phytoglobin that reduces nitrite to nitric oxide (NO) under anoxic conditions (e.g. during flooding or in waterlogged soil). May not function as an oxygen storage or transport protein. Has an unusually high affinity for O(2) through an hexacoordinate heme iron because of a very low dissociation constant. This chain is Anaerobic nitrite reductase GLB0, found in Physcomitrium patens (Spreading-leaved earth moss).